The chain runs to 422 residues: UDP-N-acetylglucosamine 1-carboxyvinyltransferase (422 aa).

22–23 (KN) lines the phosphoenolpyruvate pocket. UDP-N-acetyl-alpha-D-glucosamine is bound at residue Arg-95. Cys-119 acts as the Proton donor in catalysis. A 2-(S-cysteinyl)pyruvic acid O-phosphothioketal modification is found at Cys-119. Residues 124 to 128 (RPIDQ), Asp-309, and Val-331 each bind UDP-N-acetyl-alpha-D-glucosamine.

This sequence belongs to the EPSP synthase family. MurA subfamily.

It is found in the cytoplasm. It carries out the reaction phosphoenolpyruvate + UDP-N-acetyl-alpha-D-glucosamine = UDP-N-acetyl-3-O-(1-carboxyvinyl)-alpha-D-glucosamine + phosphate. The protein operates within cell wall biogenesis; peptidoglycan biosynthesis. Cell wall formation. Adds enolpyruvyl to UDP-N-acetylglucosamine. The polypeptide is UDP-N-acetylglucosamine 1-carboxyvinyltransferase (Anaeromyxobacter dehalogenans (strain 2CP-1 / ATCC BAA-258)).